The primary structure comprises 299 residues: Probable lipid kinase YegS (299 aa).

Residues 2–133 (ANFPASLLIL…IDMAMVNDKT (132 aa)) form the DAGKc domain. ATP is bound by residues Thr40, 66-72 (GDGTINE), and Thr95. 3 residues coordinate Mg(2+): Leu215, Asp218, and Leu220. Glu271 functions as the Proton acceptor in the catalytic mechanism.

Belongs to the diacylglycerol/lipid kinase family. YegS lipid kinase subfamily. The cofactor is Mg(2+). Ca(2+) serves as cofactor.

The protein localises to the cytoplasm. In terms of biological role, probably phosphorylates lipids; the in vivo substrate is unknown. The polypeptide is Probable lipid kinase YegS (Salmonella choleraesuis (strain SC-B67)).